We begin with the raw amino-acid sequence, 565 residues long: Wee1-like protein kinase 2 (565 aa).

Disordered stretches follow at residues 18 to 78 (YCEE…KSPE) and 169 to 191 (KSNG…GNVE). The segment covering 19–29 (CEEESESEGQE) has biased composition (acidic residues). Positions 31–51 (WETRDAHSQIPDRAEGQESEA) are enriched in basic and acidic residues. Serine 76 carries the post-translational modification Phosphoserine. Positions 173–175 (KRK) match the Nuclear localization signal motif. The 279-residue stretch at 214–492 (FLEVEKIGVG…ARSRVLRPSL (279 aa)) folds into the Protein kinase domain. ATP is bound by residues 220–228 (IGVGEFGTV) and lysine 243. The Nuclear export signal motif lies at 317 to 331 (KLKDILLQISLGLKY). Aspartate 341 functions as the Proton acceptor in the catalytic mechanism. Positions 346 and 382 each coordinate Mg(2+). Residues 495-521 (AEELQQQLNLEKFKTATLERELREAQQ) adopt a coiled-coil conformation. Residues 521-565 (QAWFSQEERGDAGVSGTPTGSRSTKRLVGGKSAKSSSFTWGKSSP) form a disordered region. A compositionally biased stretch (polar residues) spans 553–565 (AKSSSFTWGKSSP).

It belongs to the protein kinase superfamily. Ser/Thr protein kinase family. WEE1 subfamily. Post-translationally, phosphorylation leads to increase its activity.

The protein resides in the nucleus. It catalyses the reaction L-tyrosyl-[protein] + ATP = O-phospho-L-tyrosyl-[protein] + ADP + H(+). In terms of biological role, oocyte-specific protein tyrosine kinase that phosphorylates and inhibits CDK1 and acts as a key regulator of meiosis during both prophase I and metaphase II. Required to maintain meiotic arrest in oocytes during the germinal vesicle (GV) stage, a long period of quiescence at dictyate prophase I, by phosphorylating CDK1 at 'Tyr-15', leading to inhibit CDK1 activity and prevent meiotic reentry. Also required for metaphase II exit during egg activation by phosphorylating CDK1 at 'Tyr-15', to ensure exit from meiosis in oocytes and promote pronuclear formation. The chain is Wee1-like protein kinase 2 (WEE2) from Ailuropoda melanoleuca (Giant panda).